The sequence spans 218 residues: uncharacterized protein (218 aa).

Positions 1–67 are disordered; the sequence is MARITNMGKR…KKKRSEYRRL (67 aa). The span at 29 to 39 shows a compositional bias: low complexity; sequence NSSNTNEESSS. Residues 40–49 are compositionally biased toward polar residues; the sequence is QDNMKASFGS. The segment covering 58–67 has biased composition (basic residues); the sequence is KKKRSEYRRL. 3 consecutive CCHC-type zinc fingers follow at residues 77–94, 100–117, and 124–141; these read KFCF…DCPE, SICF…ACSK, and AKCF…QCEQ. A CCHC-type 4; atypical zinc finger spans residues 152–168; that stretch reads CCKFCSSVHHLAKDCDQ.

This is an uncharacterized protein from Schizosaccharomyces pombe (strain 972 / ATCC 24843) (Fission yeast).